We begin with the raw amino-acid sequence, 367 residues long: Cyclic AMP-responsive element-binding protein 3-like protein 4 (367 aa).

Positions 1 to 52 (MELGCPELLEPPEDIFSTGSFLELGFNGPPSKVPGLQKSESDDFLNLFIDPN) are required for transcriptional activation. Over 1-267 (MELGCPELLE…QTSSRAAQTS (267 aa)) the chain is Cytoplasmic. Positions 58 to 81 (ETSPGSDSGVSEDPGSPAPQAPSS) are disordered. The bZIP domain occupies 189–252 (ILKKIRRKIR…ISLVAQVHQL (64 aa)). Residues 191–230 (KKIRRKIRNKQSAQDSRRRKKEYIDGLESRVAACSEQNQK) form a basic motif region. The tract at residues 231 to 252 (LQRKVQELERQNISLVAQVHQL) is leucine-zipper. A helical; Signal-anchor for type II membrane protein transmembrane segment spans residues 268-288 (TCVLILLFSLALIILPSFSPF). The Lumenal portion of the chain corresponds to 289–367 (QSQPEARSEG…IRGMVHADEM (79 aa)). Residue Asn-338 is glycosylated (N-linked (GlcNAc...) asparagine).

Belongs to the bZIP family. ATF subfamily. Binds DNA as a dimer. Forms a heterodimer with CREM isoform Delta. Post-translationally, controlled by regulated intramembrane proteolysis (RIP). Following ER stress a fragment containing the cytoplasmic transcription factor domain is released by proteolysis. The cleavage seems to be performed sequentially by site-1 and site-2 proteases (PS1 and PS2). PS1 cleavage may be suppressed by a determinant in the C-terminal region.

Its subcellular location is the endoplasmic reticulum membrane. The protein resides in the nucleus. Its function is as follows. Transcriptional activator that may play a role in the unfolded protein response. Binds to the UPR element (UPRE) but not to CRE element. Preferentially binds DNA with to the consensus sequence 5'-T[GT]ACGT[GA][GT]-3' and has transcriptional activation activity from UPRE. Binds to NF-kappa-B site and has transcriptional activation activity from NF-kappa-B-containing regulatory elements. Increases the binding of CREM isoform Delta with CRE. The CREM isoform Delta-CREB3L4 heterodimer functions through CRE but not through UPRE and may recruit HIRA to CRE to regulate histone exchange. In Rattus norvegicus (Rat), this protein is Cyclic AMP-responsive element-binding protein 3-like protein 4 (Creb3l4).